The chain runs to 119 residues: Large ribosomal subunit protein bL19 (119 aa).

Belongs to the bacterial ribosomal protein bL19 family.

In terms of biological role, this protein is located at the 30S-50S ribosomal subunit interface and may play a role in the structure and function of the aminoacyl-tRNA binding site. The sequence is that of Large ribosomal subunit protein bL19 (rplS) from Mycoplasma pneumoniae (strain ATCC 29342 / M129 / Subtype 1) (Mycoplasmoides pneumoniae).